Reading from the N-terminus, the 29-residue chain is Phospholemman-like protein (29 aa).

The protein belongs to the FXYD family. Post-translationally, phosphorylated by protein kinase C.

It is found in the membrane. Functionally, induces a hyperpolarization-activated chloride current when expressed in Xenopus oocytes. The protein is Phospholemman-like protein of Scyliorhinus canicula (Small-spotted catshark).